We begin with the raw amino-acid sequence, 330 residues long: Cathepsin S (330 aa).

Residues 1–17 form the signal peptide; it reads MAVLGAPGVLCDNGATA. The propeptide at 18-112 is activation peptide; that stretch reads ERPTLDHHWD…GTLKSSSNQT (95 aa). N-linked (GlcNAc...) asparagine glycosylation is found at Asn-100 and Asn-110. 4 cysteine pairs are disulfide-bonded: Cys-124-Cys-222, Cys-134-Cys-179, Cys-168-Cys-211, and Cys-271-Cys-319. The active site involves Cys-137. Catalysis depends on residues His-277 and Asn-297.

It belongs to the peptidase C1 family. As to quaternary structure, monomer. Highest levels occur in the ileum followed by spleen, brain, thyroid, ovary and uterus. Low levels are found in the liver, kidney, jejunum and lung with lowest levels in the heart.

The protein resides in the lysosome. Its subcellular location is the secreted. It localises to the cytoplasmic vesicle. The protein localises to the phagosome. It catalyses the reaction Similar to cathepsin L, but with much less activity on Z-Phe-Arg-|-NHMec, and more activity on the Z-Val-Val-Arg-|-Xaa compound.. Its function is as follows. Thiol protease. Key protease responsible for the removal of the invariant chain from MHC class II molecules and MHC class II antigen presentation. The bond-specificity of this proteinase is in part similar to the specificities of cathepsin L. This is Cathepsin S (Ctss) from Rattus norvegicus (Rat).